The following is a 184-amino-acid chain: MAKYNDKELAETSKFLSFVLRHKPEAIGIVLDREGWADIDKLILCAQKAGKRLTRALLDTVVATSDKKRFSYSSDGTCIRAVQGHSTSQVAIAFIEKTPPQFLYHGTASRFLDEIKKQGLIAGERHYVHLSADEATARKVGARHGSPVILTVKAQEMAKRGIPFWQAENGVWLTSTVAVEFLEW.

The protein belongs to the KptA/TPT1 family.

Functionally, removes the 2'-phosphate from RNA via an intermediate in which the phosphate is ADP-ribosylated by NAD followed by a presumed transesterification to release the RNA and generate ADP-ribose 1''-2''-cyclic phosphate (APPR&gt;P). May function as an ADP-ribosylase. The chain is Probable RNA 2'-phosphotransferase from Escherichia coli O6:K15:H31 (strain 536 / UPEC).